The sequence spans 259 residues: Oxaloacetate tautomerase FMP41, mitochondrial (259 aa).

Mg(2+) contacts are provided by Glu87, Glu89, and Asp121.

This sequence belongs to the FAH family. Mg(2+) is required as a cofactor. Mn(2+) serves as cofactor.

It localises to the mitochondrion. The catalysed reaction is oxaloacetate = enol-oxaloacetate. Tautomerase that converts enol-oxaloacetate, a strong inhibitor of succinate dehydrogenase, to the physiological keto form of oxaloacetate. The sequence is that of Oxaloacetate tautomerase FMP41, mitochondrial from Saccharomyces cerevisiae (strain ATCC 204508 / S288c) (Baker's yeast).